We begin with the raw amino-acid sequence, 524 residues long: GMP synthase [glutamine-hydrolyzing] (524 aa).

The Glutamine amidotransferase type-1 domain occupies 8-206 (RILILDFGSQ…IYDICGCEAL (199 aa)). Cys85 acts as the Nucleophile in catalysis. Catalysis depends on residues His180 and Glu182. One can recognise a GMPS ATP-PPase domain in the interval 207–399 (WEPRHIIAKS…LGLPFELVYR (193 aa)). 234–240 (SGGVDSS) is a binding site for ATP.

As to quaternary structure, homodimer.

The catalysed reaction is XMP + L-glutamine + ATP + H2O = GMP + L-glutamate + AMP + diphosphate + 2 H(+). It participates in purine metabolism; GMP biosynthesis; GMP from XMP (L-Gln route): step 1/1. In terms of biological role, catalyzes the synthesis of GMP from XMP. The sequence is that of GMP synthase [glutamine-hydrolyzing] from Nitrosococcus oceani (strain ATCC 19707 / BCRC 17464 / JCM 30415 / NCIMB 11848 / C-107).